Consider the following 843-residue polypeptide: Neuroligin-1 (843 aa).

Residues 1 to 45 (MALPRCMWPNYVWRAMMACVVHRGSGAPLTLCLLGCLLQTFHVLS) form the signal peptide. Over 46 to 697 (QKLDDVDPLV…DQRDYSTELS (652 aa)) the chain is Extracellular. The N-linked (GlcNAc...) (complex) asparagine glycan is linked to N109. Intrachain disulfides connect C117–C153 and C172–C181. N-linked (GlcNAc...) (complex) asparagine glycosylation is found at N303 and N343. Intrachain disulfides connect C342–C353 and C512–C546. An N-linked (GlcNAc...) asparagine glycan is attached at N547. The segment at 647-688 (TKVPSTDITLRPTRKNSTPVTSAFPTAKQDDPKQQPSPFSVD) is disordered. A compositionally biased stretch (polar residues) spans 661 to 670 (KNSTPVTSAF). O-linked (GalNAc...) serine glycosylation is found at S683 and S686. A helical membrane pass occupies residues 698 to 718 (VTIAVGASLLFLNILAFAALY). The Cytoplasmic portion of the chain corresponds to 719–843 (YKKDKRRHDV…HPHSHSTTRV (125 aa)). The tract at residues 822–843 (GGQNNTLPHPHPHPHSHSTTRV) is disordered. The segment covering 831-843 (PHPHPHSHSTTRV) has biased composition (basic residues).

The protein belongs to the type-B carboxylesterase/lipase family. Interacts with neurexins NRXN1, NRXN2 and NRXN3. Interaction with neurexins is mediated by heparan sulfate glycan modification on neurexin. Interacts with NLGN3. Interacts (via its C-terminus) with DLG4/PSD-95 (via PDZ domain 3). Interacts with GOPC. Interacts with AIP1 and PDZRN3. Post-translationally, the N-terminus is blocked. In terms of tissue distribution, expressed in brain, almost exclusively in neurons, and spinal cord. Detected in pancreas islet beta cells.

It is found in the cell membrane. It localises to the postsynaptic density. The protein localises to the synaptic cleft. Its subcellular location is the synaptic cell membrane. In terms of biological role, cell surface protein involved in cell-cell-interactions via its interactions with neurexin family members. Plays a role in synapse function and synaptic signal transmission, and probably mediates its effects by recruiting and clustering other synaptic proteins. May promote the initial formation of synapses, but is not essential for this. In vitro, triggers the de novo formation of presynaptic structures. May be involved in specification of excitatory synapses. Required to maintain wakefulness quality and normal synchrony of cerebral cortex activity during wakefulness and sleep. The protein is involved in nervous system development. The protein is Neuroligin-1 (Nlgn1) of Rattus norvegicus (Rat).